Consider the following 272-residue polypeptide: Peptidoglycolipid exporter Gap (272 aa).

Transmembrane regions (helical) follow at residues 5–25 (ILGL…ILLV), 36–56 (VVFW…PLFV), 79–99 (IEPF…VIAL), 171–191 (LWVA…VLLV), 206–226 (IIAV…TLLS), and 252–272 (ILLV…LGVI).

The protein belongs to the peptidoglycolipid addressing protein (GAP) (TC 2.A.116) family.

It localises to the cell inner membrane. In terms of biological role, required for the transport of peptidoglycolipids (GPLs) to the cell surface. The polypeptide is Peptidoglycolipid exporter Gap (Mycolicibacterium smegmatis (strain ATCC 700084 / mc(2)155) (Mycobacterium smegmatis)).